Reading from the N-terminus, the 251-residue chain is MRKPIIAGNWKMNKTAAKAGQFAEDVKNNVPSSDAVESVVAAPALFLQELVRLTEGTNLRVAAQNCYFEDEGAFTGEISPFALADLGVSYVIIGHSERREYFHETDEDINKKAHAIFKHGMTPIICCGETLDQREAGQTDTWVRGQIRAALAGLTEEQVIKSVIAYEPIWAIGTGKSSTSADANETCAVIRAEVADAVSQKAADAVRIQYGGSVKPENIADYLAESDIDGALVGGASLEPASFLALLEAVK.

Substrate is bound at residue 9–11 (NWK). The active-site Electrophile is His95. The Proton acceptor role is filled by Glu167. Residues Gly173, Ser213, and 234–235 (GG) each bind substrate.

It belongs to the triosephosphate isomerase family. In terms of assembly, homodimer.

The protein resides in the cytoplasm. The catalysed reaction is D-glyceraldehyde 3-phosphate = dihydroxyacetone phosphate. It participates in carbohydrate biosynthesis; gluconeogenesis. Its pathway is carbohydrate degradation; glycolysis; D-glyceraldehyde 3-phosphate from glycerone phosphate: step 1/1. Functionally, involved in the gluconeogenesis. Catalyzes stereospecifically the conversion of dihydroxyacetone phosphate (DHAP) to D-glyceraldehyde-3-phosphate (G3P). This is Triosephosphate isomerase 1 from Listeria innocua serovar 6a (strain ATCC BAA-680 / CLIP 11262).